The sequence spans 291 residues: Small ribosomal subunit biogenesis GTPase RsgA (291 aa).

The CP-type G domain maps to 63–221 (NNELKRPPVS…IADTPGFSAL (159 aa)). Residues 112 to 115 (TKHD) and 164 to 172 (GQSGVGKST) contribute to the GTP site. The Zn(2+) site is built by cysteine 245, cysteine 250, histidine 252, and cysteine 258.

It belongs to the TRAFAC class YlqF/YawG GTPase family. RsgA subfamily. In terms of assembly, monomer. Associates with 30S ribosomal subunit, binds 16S rRNA. It depends on Zn(2+) as a cofactor.

It is found in the cytoplasm. Functionally, one of several proteins that assist in the late maturation steps of the functional core of the 30S ribosomal subunit. Helps release RbfA from mature subunits. May play a role in the assembly of ribosomal proteins into the subunit. Circularly permuted GTPase that catalyzes slow GTP hydrolysis, GTPase activity is stimulated by the 30S ribosomal subunit. The polypeptide is Small ribosomal subunit biogenesis GTPase RsgA (Staphylococcus epidermidis (strain ATCC 12228 / FDA PCI 1200)).